The chain runs to 267 residues: tRNA pseudouridine synthase A (267 aa).

D51 functions as the Nucleophile in the catalytic mechanism. Y109 contributes to the substrate binding site.

This sequence belongs to the tRNA pseudouridine synthase TruA family. As to quaternary structure, homodimer.

The enzyme catalyses uridine(38/39/40) in tRNA = pseudouridine(38/39/40) in tRNA. Functionally, formation of pseudouridine at positions 38, 39 and 40 in the anticodon stem and loop of transfer RNAs. This is tRNA pseudouridine synthase A from Staphylococcus epidermidis (strain ATCC 35984 / DSM 28319 / BCRC 17069 / CCUG 31568 / BM 3577 / RP62A).